Here is a 289-residue protein sequence, read N- to C-terminus: Urease accessory protein UreD (289 aa).

It belongs to the UreD family. In terms of assembly, ureD, UreF and UreG form a complex that acts as a GTP-hydrolysis-dependent molecular chaperone, activating the urease apoprotein by helping to assemble the nickel containing metallocenter of UreC. The UreE protein probably delivers the nickel.

It localises to the cytoplasm. Functionally, required for maturation of urease via the functional incorporation of the urease nickel metallocenter. The chain is Urease accessory protein UreD from Magnetococcus marinus (strain ATCC BAA-1437 / JCM 17883 / MC-1).